A 137-amino-acid polypeptide reads, in one-letter code: BolA-like protein 1 (137 aa).

Phosphoserine is present on Ser81. Positions 114-137 (WRENSQLDTSPPCLGGNKKTLGTP) are disordered.

It belongs to the BolA/IbaG family. As to quaternary structure, interacts with GLRX5. Widely expressed.

It localises to the mitochondrion. In terms of biological role, acts as a mitochondrial iron-sulfur (Fe-S) cluster assembly factor that facilitates (Fe-S) cluster insertion into a subset of mitochondrial proteins. Probably acts together with the monothiol glutaredoxin GLRX5. May protect cells against oxidative stress. This is BolA-like protein 1 from Homo sapiens (Human).